Here is a 735-residue protein sequence, read N- to C-terminus: Disintegrin and metalloproteinase domain-containing protein 2 (735 aa).

Positions 1 to 18 (MWLILLLLSGLSELGGLS) are cleaved as a signal peptide. The propeptide occupies 19–180 (QSQTEGTREK…YKIRSIKPQR (162 aa)). Residues 19 to 686 (QSQTEGTREK…ASAYRSKSPR (668 aa)) are Extracellular-facing. N-linked (GlcNAc...) asparagine glycans are attached at residues Asn128, Asn226, and Asn279. Residues 184-381 (HYLEIHIVVE…QSSHCLQNQP (198 aa)) enclose the Peptidase M12B domain. 4 cysteine pairs are disulfide-bonded: Cys293/Cys376, Cys335/Cys360, Cys337/Cys342, and Cys449/Cys469. Residues Asn359, Asn463, Asn489, Asn569, and Asn585 are each glycosylated (N-linked (GlcNAc...) asparagine). The region spanning 389 to 476 (MAVCGNGEVE…EVCEDFFVQN (88 aa)) is the Disintegrin domain. The EGF-like domain occupies 615 to 648 (LGYDCNLEKCNHHGVCNNKKNCHCDPTYLPPDCK). 3 cysteine pairs are disulfide-bonded: Cys619–Cys630, Cys624–Cys636, and Cys638–Cys647. The chain crosses the membrane as a helical span at residues 687-707 (WPFFLIIPFYVVILVLIGMLV). Residues 708–735 (KVYSQRMKWRMDDFSSEEQFESESESKD) are Cytoplasmic-facing. Ser729 is subject to Phosphoserine.

Heterodimer with ADAM1/fertilin subunit alpha. The signal and the metalloprotease domain are cleaved during the epididymal maturation of the spermatozoa. As to expression, expressed in the testis and testicular sperm (at protein level).

It localises to the membrane. In terms of biological role, sperm surface membrane protein that may be involved in sperm-egg plasma membrane adhesion and fusion during fertilization. Could have a direct role in sperm-zona binding or migration of sperm from the uterus into the oviduct. Interactions with egg membrane could be mediated via binding between its disintegrin-like domain to one or more integrins receptors on the egg. This is a non catalytic metalloprotease-like protein. This chain is Disintegrin and metalloproteinase domain-containing protein 2, found in Mus musculus (Mouse).